The primary structure comprises 400 residues: Nicotinate phosphoribosyltransferase (400 aa).

A Phosphohistidine; by autocatalysis modification is found at His-220.

The protein belongs to the NAPRTase family. In terms of processing, transiently phosphorylated on a His residue during the reaction cycle. Phosphorylation strongly increases the affinity for substrates and increases the rate of nicotinate D-ribonucleotide production. Dephosphorylation regenerates the low-affinity form of the enzyme, leading to product release.

It carries out the reaction nicotinate + 5-phospho-alpha-D-ribose 1-diphosphate + ATP + H2O = nicotinate beta-D-ribonucleotide + ADP + phosphate + diphosphate. It participates in cofactor biosynthesis; NAD(+) biosynthesis; nicotinate D-ribonucleotide from nicotinate: step 1/1. In terms of biological role, catalyzes the synthesis of beta-nicotinate D-ribonucleotide from nicotinate and 5-phospho-D-ribose 1-phosphate at the expense of ATP. The sequence is that of Nicotinate phosphoribosyltransferase from Salmonella agona (strain SL483).